A 236-amino-acid polypeptide reads, in one-letter code: Aspartate/glutamate leucyltransferase (236 aa).

The protein belongs to the R-transferase family. Bpt subfamily.

It localises to the cytoplasm. It catalyses the reaction N-terminal L-glutamyl-[protein] + L-leucyl-tRNA(Leu) = N-terminal L-leucyl-L-glutamyl-[protein] + tRNA(Leu) + H(+). The catalysed reaction is N-terminal L-aspartyl-[protein] + L-leucyl-tRNA(Leu) = N-terminal L-leucyl-L-aspartyl-[protein] + tRNA(Leu) + H(+). Its function is as follows. Functions in the N-end rule pathway of protein degradation where it conjugates Leu from its aminoacyl-tRNA to the N-termini of proteins containing an N-terminal aspartate or glutamate. The polypeptide is Aspartate/glutamate leucyltransferase (Saccharophagus degradans (strain 2-40 / ATCC 43961 / DSM 17024)).